We begin with the raw amino-acid sequence, 435 residues long: T-box transcription factor T (435 aa).

The T-box DNA-binding region spans 51 to 219 (LWLRFKELTN…YNPFAKAFLD (169 aa)). 2 disordered regions span residues 280-310 (PALR…PSAC) and 384-412 (APLG…DVPD). The span at 297 to 310 (RNNSPTYSDNPSAC) shows a compositional bias: polar residues.

In terms of assembly, monomer. Binds DNA as a monomer.

It is found in the nucleus. Functionally, involved in the transcriptional regulation of genes required for mesoderm formation and differentiation. Binds to a palindromic site (called T site) and activates gene transcription when bound to such a site. This is T-box transcription factor T from Canis lupus familiaris (Dog).